The chain runs to 246 residues: Ly6/PLAUR domain-containing protein 4 (246 aa).

A signal peptide spans 1–26; that stretch reads MGPQHLRLVQLFCLLGAISTLPRAGA. Asn-117 is a glycosylation site (N-linked (GlcNAc...) asparagine). One can recognise a UPAR/Ly6 domain in the interval 142 to 223; it reads CPTCVGEHMK…LNILEKSQIV (82 aa). Residue Ala-225 is the site of GPI-anchor amidated alanine attachment. The propeptide at 226-246 is removed in mature form; that stretch reads ASSRQDPAWGVVLGLLFAFRD.

The protein localises to the cell membrane. The protein is Ly6/PLAUR domain-containing protein 4 (LYPD4) of Homo sapiens (Human).